A 322-amino-acid polypeptide reads, in one-letter code: Epiphycan (322 aa).

The N-terminal stretch at 1 to 19 (MKTLAGLVLGLVIFDAAVT) is a signal peptide. Threonine 60 is a glycosylation site (O-linked (GalNAc...) threonine). Serine 64 is a glycosylation site (O-linked (Xyl...) (dermatan sulfate) serine). The interval 64-101 (SGNRELLTPPPQPEKAQEEEEEEESTPRLIDGSSPQEP) is disordered. Serine 96 is a glycosylation site (O-linked (GalNAc...) serine). Residues 106-143 (VLGPHTNEDFPTCLLCTCISTTVYCDDHELDAIPPLPK) enclose the LRRNT domain. Cysteine 118 and cysteine 130 are oxidised to a cystine. 5 LRR repeats span residues 144 to 165 (NTAY…DFAS), 168 to 189 (DLKR…AFRK), 192 to 213 (QLRE…PTTL), 238 to 258 (DLHH…PLPE), and 259 to 280 (NLRA…TFCN). Cysteine 279 and cysteine 312 are disulfide-bonded. Residues asparagine 283 and asparagine 302 are each glycosylated (N-linked (GlcNAc...) asparagine). Residues 290–310 (ALEDIRLDGNPINLSKTPQAY) form an LRR 6 repeat.

Belongs to the small leucine-rich proteoglycan (SLRP) family. SLRP class III subfamily. Post-translationally, the O-linked polysaccharides on Thr-60 and Ser-96 are probably the mucin type linked to GalNAc. There is one glycosaminoglycan chain, known to be dermatan sulfate, and it is probably the O-glycosylation at Ser-64. As to expression, cartilage, ligament, and placenta.

It is found in the secreted. The protein localises to the extracellular space. The protein resides in the extracellular matrix. Functionally, may have a role in bone formation and also in establishing the ordered structure of cartilage through matrix organization. This is Epiphycan (EPYC) from Homo sapiens (Human).